A 248-amino-acid chain; its full sequence is Triosephosphate isomerase (248 aa).

9–11 lines the substrate pocket; that stretch reads NWK. The active-site Electrophile is H94. The Proton acceptor role is filled by E166. Substrate is bound by residues G172, S212, and 233 to 234; that span reads GG.

Belongs to the triosephosphate isomerase family. Homodimer.

The protein resides in the cytoplasm. The catalysed reaction is D-glyceraldehyde 3-phosphate = dihydroxyacetone phosphate. The protein operates within carbohydrate biosynthesis; gluconeogenesis. Its pathway is carbohydrate degradation; glycolysis; D-glyceraldehyde 3-phosphate from glycerone phosphate: step 1/1. In terms of biological role, involved in the gluconeogenesis. Catalyzes stereospecifically the conversion of dihydroxyacetone phosphate (DHAP) to D-glyceraldehyde-3-phosphate (G3P). The polypeptide is Triosephosphate isomerase (Clostridium botulinum (strain Okra / Type B1)).